Consider the following 652-residue polypeptide: Aorsin (652 aa).

A signal peptide spans 1–22; the sequence is MRPLSHLSFFNGLLLGLSALSA. The propeptide at 23–215 is removed in mature form; sequence ATSVVHERRE…PRPIQQHDVK (193 aa). N-linked (GlcNAc...) asparagine glycosylation occurs at asparagine 112. Residues 177–211 are disordered; sequence VNLNPSSGKPSSIRRRAAASKKTKLPARGPRPIQQ. Residues 188–201 show a composition bias toward basic residues; sequence SIRRRAAASKKTKL. 2 N-linked (GlcNAc...) asparagine glycosylation sites follow: asparagine 218 and asparagine 247. The 427-residue stretch at 225-651 folds into the Peptidase S53 domain; sequence LITPECIRAL…PKMLKLWLDL (427 aa). Catalysis depends on charge relay system residues glutamate 301 and aspartate 305. Residues asparagine 331 and asparagine 445 are each glycosylated (N-linked (GlcNAc...) asparagine). Serine 569 functions as the Charge relay system in the catalytic mechanism. Positions 610 and 611 each coordinate Ca(2+). Residue asparagine 613 is glycosylated (N-linked (GlcNAc...) asparagine). Ca(2+) is bound by residues glycine 629 and aspartate 631.

Requires Ca(2+) as cofactor. Post-translationally, N-glycosylated. O-glycosylated.

The protein localises to the secreted. Its subcellular location is the extracellular space. Its activity is regulated as follows. Inhibited by antipain and leupeptin. In terms of biological role, serine endopeptidase which hydrolyzes a range of fluorogenic peptide substrates containing the basic residues arginine or lysine at the P1 position and prefers paired basic resides. Also hydrolyzes clupeine and salmine, activates plasminogen and converts trypsinogen to trypsin. The chain is Aorsin from Aspergillus oryzae (strain ATCC 42149 / RIB 40) (Yellow koji mold).